The following is a 143-amino-acid chain: Anti-sigma F factor (143 aa).

Belongs to the anti-sigma-factor family.

It carries out the reaction L-seryl-[protein] + ATP = O-phospho-L-seryl-[protein] + ADP + H(+). The enzyme catalyses L-threonyl-[protein] + ATP = O-phospho-L-threonyl-[protein] + ADP + H(+). Functionally, binds to sigma F and blocks its ability to form an RNA polymerase holoenzyme (E-sigma F). Phosphorylates SpoIIAA on a serine residue. This phosphorylation may enable SpoIIAA to act as an anti-anti-sigma factor that counteracts SpoIIAB and thus releases sigma F from inhibition. The chain is Anti-sigma F factor from Clostridium botulinum (strain Alaska E43 / Type E3).